Here is a 274-residue protein sequence, read N- to C-terminus: NADPH-dependent 7-cyano-7-deazaguanine reductase (274 aa).

Position 80–82 (80–82 (VES)) interacts with substrate. NADPH is bound at residue 82-83 (SK). Cysteine 181 functions as the Thioimide intermediate in the catalytic mechanism. Residue aspartate 188 is the Proton donor of the active site. Position 220–221 (220–221 (HE)) interacts with substrate. An NADPH-binding site is contributed by 249-250 (RG).

The protein belongs to the GTP cyclohydrolase I family. QueF type 2 subfamily. In terms of assembly, homodimer.

The protein localises to the cytoplasm. It carries out the reaction 7-aminomethyl-7-carbaguanine + 2 NADP(+) = 7-cyano-7-deazaguanine + 2 NADPH + 3 H(+). Its pathway is tRNA modification; tRNA-queuosine biosynthesis. Functionally, catalyzes the NADPH-dependent reduction of 7-cyano-7-deazaguanine (preQ0) to 7-aminomethyl-7-deazaguanine (preQ1). The sequence is that of NADPH-dependent 7-cyano-7-deazaguanine reductase from Burkholderia ambifaria (strain ATCC BAA-244 / DSM 16087 / CCUG 44356 / LMG 19182 / AMMD) (Burkholderia cepacia (strain AMMD)).